We begin with the raw amino-acid sequence, 459 residues long: mRNA-capping enzyme subunit alpha (459 aa).

Lysine 70 (N6-GMP-lysine intermediate) is an active-site residue. Residues 415–459 (MAGGSGRPLPSQSQNATLSTSKPVHSQPPSNDKEPKYVDEDDWSD) are disordered. Residues 424–444 (PSQSQNATLSTSKPVHSQPPS) show a composition bias toward polar residues.

The protein belongs to the eukaryotic GTase family. In terms of assembly, heterodimer. The mRNA-capping enzyme is composed of two separate chains alpha and beta, respectively a mRNA guanylyltransferase and an mRNA 5'-triphosphate monophosphatase.

The protein resides in the nucleus. The catalysed reaction is a 5'-end diphospho-ribonucleoside in mRNA + GTP + H(+) = a 5'-end (5'-triphosphoguanosine)-ribonucleoside in mRNA + diphosphate. Functionally, second step of mRNA capping. Transfer of the GMP moiety of GTP to the 5'-diphosphate terminus of RNA via a covalent enzyme-GMP reaction intermediate. The protein is mRNA-capping enzyme subunit alpha (CEG1) of Saccharomyces cerevisiae (strain ATCC 204508 / S288c) (Baker's yeast).